We begin with the raw amino-acid sequence, 25 residues long: Caerin-2.5 (25 aa).

In terms of tissue distribution, expressed by the skin parotoid and/or rostral glands.

It is found in the secreted. In terms of biological role, antibacterial peptide, that adopts an alpha helical conformation which can disrupt bacterial membranes. Each caerin displays a different antimicrobial specificity. The protein is Caerin-2.5 of Ranoidea gilleni (Centralian tree frog).